The sequence spans 297 residues: ER membrane protein complex subunit 2 (297 aa).

The residue at position 2 (Ala2) is an N-acetylalanine. 3 TPR repeats span residues 87 to 120 (HRVK…DPTN), 155 to 188 (QEAW…NPHN), and 192 to 225 (CQQY…NNRN). Lys255 is subject to N6-acetyllysine.

It belongs to the EMC2 family. Component of the ER membrane protein complex (EMC). Interacts with WNK1 (via amphipathic alpha-helix region); promoting the ER membrane protein complex assembly by preventing EMC2 ubiquitination. Post-translationally, ubiquitinated when soluble in the cytoplasm, leading to its degradation by the proteasome. Interaction with EMC2 prevents its ubiquitination and degradation.

The protein resides in the endoplasmic reticulum membrane. Part of the endoplasmic reticulum membrane protein complex (EMC) that enables the energy-independent insertion into endoplasmic reticulum membranes of newly synthesized membrane proteins. Preferentially accommodates proteins with transmembrane domains that are weakly hydrophobic or contain destabilizing features such as charged and aromatic residues. Involved in the cotranslational insertion of multi-pass membrane proteins in which stop-transfer membrane-anchor sequences become ER membrane spanning helices. It is also required for the post-translational insertion of tail-anchored/TA proteins in endoplasmic reticulum membranes. By mediating the proper cotranslational insertion of N-terminal transmembrane domains in an N-exo topology, with translocated N-terminus in the lumen of the ER, controls the topology of multi-pass membrane proteins like the G protein-coupled receptors. By regulating the insertion of various proteins in membranes, it is indirectly involved in many cellular processes. The polypeptide is ER membrane protein complex subunit 2 (Pongo abelii (Sumatran orangutan)).